Consider the following 59-residue polypeptide: MAVPKKKTSNSKRDSRRAHWNRKANLAAQRALSTGKSILTGRAKGFEYPTKDDDEDDDE.

A compositionally biased stretch (basic residues) spans 1–22; the sequence is MAVPKKKTSNSKRDSRRAHWNR. The interval 1–59 is disordered; sequence MAVPKKKTSNSKRDSRRAHWNRKANLAAQRALSTGKSILTGRAKGFEYPTKDDDEDDDE.

This sequence belongs to the bacterial ribosomal protein bL32 family.

In Acaryochloris marina (strain MBIC 11017), this protein is Large ribosomal subunit protein bL32.